The sequence spans 451 residues: D-aminoacyl-tRNA deacylase (451 aa).

The disordered stretch occupies residues 410–437 (RTADIPEGPKFGKLASGESVEIDGEEID).

It belongs to the DtdA deacylase family. Monomer. Requires Zn(2+) as cofactor.

It carries out the reaction a D-aminoacyl-tRNA + H2O = a tRNA + a D-alpha-amino acid + H(+). It catalyses the reaction glycyl-tRNA(Ala) + H2O = tRNA(Ala) + glycine + H(+). Functionally, D-aminoacyl-tRNA deacylase with broad substrate specificity. By recycling D-aminoacyl-tRNA to D-amino acids and free tRNA molecules, this enzyme counteracts the toxicity associated with the formation of D-aminoacyl-tRNA entities in vivo. In Haloarcula marismortui (strain ATCC 43049 / DSM 3752 / JCM 8966 / VKM B-1809) (Halobacterium marismortui), this protein is D-aminoacyl-tRNA deacylase.